An 83-amino-acid polypeptide reads, in one-letter code: MDTSLKNNDGASEADNKNYQDYKDESGNINDVINAIKHNSMVDCCHKNYSTFSSEWYMNERKYDDIAEGPSPKKSVVHRCTII.

Residues 1–10 (MDTSLKNNDG) show a composition bias toward polar residues. Residues 1-25 (MDTSLKNNDGASEADNKNYQDYKDE) are disordered. Positions 14–25 (ADNKNYQDYKDE) are enriched in basic and acidic residues.

The protein belongs to the asfivirus L83L family. As to quaternary structure, interacts with host IL1B.

The protein resides in the host cytoplasm. May subvert the host innate immune response by interacting with host IL1B and interfering with its function. This is Protein L83L from Ornithodoros (relapsing fever ticks).